The sequence spans 427 residues: GTPase ERA-like, chloroplastic (427 aa).

The transit peptide at Met1 to Thr39 directs the protein to the chloroplast. The Era-type G domain maps to Arg128 to Phe298. The tract at residues Gly136–Ser143 is G1. Gly136–Ser143 is a GTP binding site. Positions Gln162–His166 are G2. The segment at Asp183–Gly186 is G3. Residues Asp183–Val187 and Asn248–Asp251 contribute to the GTP site. The interval Asn248–Asp251 is G4. The segment at Val277–Ala279 is G5. The region spanning Tyr329–Glu406 is the KH type-2 domain.

This sequence belongs to the TRAFAC class TrmE-Era-EngA-EngB-Septin-like GTPase superfamily. Era GTPase family.

It localises to the plastid. The protein resides in the chloroplast stroma. Its subcellular location is the chloroplast nucleoid. In terms of biological role, nuclear genome-encoded probable GTPase involved in ribosome biogenesis in chloroplasts. Plays a role in 16S rRNA maturation in plastids and may contribute to the assembly of the small (30S) ribosomal subunit. This chain is GTPase ERA-like, chloroplastic, found in Arabidopsis thaliana (Mouse-ear cress).